The primary structure comprises 383 residues: Serine protease 23 (383 aa).

The signal sequence occupies residues 1 to 23; that stretch reads MAGIPGLLILLLVLLCVFMQVSP. An N-linked (GlcNAc...) asparagine glycan is attached at Asn-93. Cysteines 160 and 176 form a disulfide. The active-site Charge relay system is the His-175. Asn-207 carries an N-linked (GlcNAc...) asparagine glycan. Active-site charge relay system residues include Asp-240 and Ser-316.

Belongs to the peptidase S1 family.

The protein resides in the secreted. The polypeptide is Serine protease 23 (Prss23) (Rattus norvegicus (Rat)).